We begin with the raw amino-acid sequence, 887 residues long: Centrobin (887 aa).

Residues 1–34 are disordered; that stretch reads MATAAPSPSSPLRPEDLLSDSSEPPGLNQVSSEV. A Phosphoserine modification is found at Ser81. 4 disordered regions span residues 110 to 153, 465 to 486, 566 to 591, and 636 to 695; these read MLHT…PSSS, SLRQ…LSGQ, TLLP…EKGE, and LGPP…LPPA. Over residues 113 to 128 the composition is skewed to basic and acidic residues; sequence TSRDTAYRTGSERREE. A compositionally biased stretch (polar residues) spans 133–153; the sequence is SDSTATLLNTRPLQDLSPSSS. Residues 191–557 adopt a coiled-coil conformation; sequence RRKHCERHIQ…LQAMLQAHWE (367 aa). A required for centrosome localization region spans residues 360-887; that stretch reads QEHQLKERLQ…SMRSRGGIWR (528 aa). Positions 670–680 are enriched in basic and acidic residues; sequence TDDHRAERPFP. A Phosphoserine modification is found at Ser782. The segment at 824–887 is disordered; the sequence is GTDGQGELVP…SMRSRGGIWR (64 aa). Residues 832-849 are compositionally biased toward basic and acidic residues; that stretch reads VPRRNTDSRLGETTRKEI.

In terms of assembly, interacts with LYST.

The protein localises to the cytoplasm. Its subcellular location is the cytoskeleton. The protein resides in the microtubule organizing center. It localises to the centrosome. It is found in the centriole. Functionally, required for centriole duplication. Inhibition of centriole duplication leading to defects in cytokinesis. This Mus musculus (Mouse) protein is Centrobin (Cntrob).